The following is a 188-amino-acid chain: Crossover junction endodeoxyribonuclease RuvC (188 aa).

Active-site residues include aspartate 7, glutamate 68, and aspartate 141. Residues aspartate 7, glutamate 68, and aspartate 141 each coordinate Mg(2+).

This sequence belongs to the RuvC family. Homodimer which binds Holliday junction (HJ) DNA. The HJ becomes 2-fold symmetrical on binding to RuvC with unstacked arms; it has a different conformation from HJ DNA in complex with RuvA. In the full resolvosome a probable DNA-RuvA(4)-RuvB(12)-RuvC(2) complex forms which resolves the HJ. Mg(2+) is required as a cofactor.

It localises to the cytoplasm. It carries out the reaction Endonucleolytic cleavage at a junction such as a reciprocal single-stranded crossover between two homologous DNA duplexes (Holliday junction).. Its function is as follows. The RuvA-RuvB-RuvC complex processes Holliday junction (HJ) DNA during genetic recombination and DNA repair. Endonuclease that resolves HJ intermediates. Cleaves cruciform DNA by making single-stranded nicks across the HJ at symmetrical positions within the homologous arms, yielding a 5'-phosphate and a 3'-hydroxyl group; requires a central core of homology in the junction. The consensus cleavage sequence is 5'-(A/T)TT(C/G)-3'. Cleavage occurs on the 3'-side of the TT dinucleotide at the point of strand exchange. HJ branch migration catalyzed by RuvA-RuvB allows RuvC to scan DNA until it finds its consensus sequence, where it cleaves and resolves the cruciform DNA. The polypeptide is Crossover junction endodeoxyribonuclease RuvC (Mycobacterium leprae (strain TN)).